We begin with the raw amino-acid sequence, 571 residues long: Ferroportin (571 aa).

The Cytoplasmic segment spans residues 1–23 (MTRAGDHNRQRGCCGSLADYLTS). The helical transmembrane segment at 24 to 53 (AKFLLYLGHSLSTWGDRMWHFAVSVFLVEL) threads the bilayer. Fe cation contacts are provided by Asp39 and His43. Over 54 to 57 (YGNS) the chain is Extracellular. A helical transmembrane segment spans residues 58 to 84 (LLLTAVYGLVVAGSVLVLGAIIGDWVD). Residues 85 to 87 (KNA) are Cytoplasmic-facing. Residues 88 to 118 (RLKVAQTSLVVQNVSVILCGIILMMVFLHKH) form a helical membrane-spanning segment. The Extracellular segment spans residues 119-126 (ELLTMYHG). Residues 127 to 162 (WVLTSCYILIITIANIANLASTATAITIQRDWIVVV) traverse the membrane as a helical segment. The Cytoplasmic segment spans residues 163-164 (AG). The chain crosses the membrane as a helical span at residues 165–195 (EDRSKLANMNATIRRIDQLTNILAPMAVGQI). Residues 196–202 (MTFGSPV) are Extracellular-facing. A helical transmembrane segment spans residues 203 to 229 (IGCGFISGWNLVSMCVEYVLLWKVYQK). At 230–306 (TPALAVKAGL…DGWVSYYNQP (77 aa)) the chain is on the cytoplasmic side. Residues 307–333 (VFLAGMGLAFLYMTVLGFDCITTGYAY) form a helical membrane-spanning segment. Cys326 serves as a coordination point for Fe cation. Residues 334-338 (TQGLS) lie on the Extracellular side of the membrane. Residues 339–366 (GSILSILMGASAITGIMGTVAFTWLRRK) traverse the membrane as a helical segment. The Cytoplasmic segment spans residues 367-368 (CG). The helical transmembrane segment at 369–391 (LVRTGLISGLAQLSCLILCVISV) threads the bilayer. Over 392-453 (FMPGSPLDLS…ETSPESVPII (62 aa)) the chain is Extracellular. Asn434 carries N-linked (GlcNAc...) asparagine glycosylation. A helical transmembrane segment spans residues 454–483 (SVSLLFAGVIAARIGLWSFDLTVTQLLQEN). The Cytoplasmic portion of the chain corresponds to 484–488 (VIESE). A helical membrane pass occupies residues 489–513 (RGIINGVQNSMNYLLDLLHFIMVIL). Residue His507 coordinates Fe cation. Over 514–516 (APN) the chain is Extracellular. Residues 517–542 (PEAFGLLVLISVSFVAMGHIMYFRFA) traverse the membrane as a helical segment. The Cytoplasmic segment spans residues 543–571 (QNTLGNKLFACGPDAKEVRKENQANTSVV).

The protein belongs to the ferroportin (FP) (TC 2.A.100) family. SLC40A subfamily. As to quaternary structure, identified in a complex with STOM. Interacts with HAMP; affinity of the peptide hormone HAMP for SLC40A1 increases by 80-fold in the presence of iron and the interaction promotes SLC40A1 ubiquitination and degradation. Part of a complex composed of SLC40A1/ferroportin, TF/transferrin and HEPH/hephaestin that transfers iron from cells to transferrin. In terms of processing, polyubiquitinated by RNF217; leading to proteasomal degradation. Under conditions of high systemic iron levels, both the hormone peptide hepcidin/HAMP and holo(iron bound)-transferrin/TF induce the ubiquitination, internalization and proteasomal degradation of SLC40A1 to control iron release from cells. Detected in erythrocytes (at protein level). Expressed in placenta, intestine, muscle and spleen. Highly expressed in mature red blood.

It localises to the cell membrane. The protein localises to the basolateral cell membrane. It carries out the reaction Fe(2+)(in) = Fe(2+)(out). Transports Fe(2+) from the inside of a cell to the outside of the cell, playing a key role for maintaining systemic iron homeostasis. Transports iron from intestinal, splenic, hepatic cells, macrophages and erythrocytes into the blood to provide iron to other tissues. Controls therefore dietary iron uptake, iron recycling by macrophages and erythrocytes, and release of iron stores in hepatocytes. When iron is in excess in serum, circulating HAMP/hepcidin levels increase resulting in a degradation of SLC40A1, thus limiting the iron efflux to plasma. The polypeptide is Ferroportin (Homo sapiens (Human)).